A 158-amino-acid polypeptide reads, in one-letter code: Phosphopantetheine adenylyltransferase (158 aa).

T9 contributes to the substrate binding site. Residues 9–10 (TF) and H17 each bind ATP. 3 residues coordinate substrate: K41, L73, and R87. Residues 88 to 90 (GLR), E98, and 123 to 129 (YAYISSS) contribute to the ATP site.

The protein belongs to the bacterial CoaD family. In terms of assembly, homohexamer. Mg(2+) serves as cofactor.

Its subcellular location is the cytoplasm. The enzyme catalyses (R)-4'-phosphopantetheine + ATP + H(+) = 3'-dephospho-CoA + diphosphate. The protein operates within cofactor biosynthesis; coenzyme A biosynthesis; CoA from (R)-pantothenate: step 4/5. Its function is as follows. Reversibly transfers an adenylyl group from ATP to 4'-phosphopantetheine, yielding dephospho-CoA (dPCoA) and pyrophosphate. In Allochromatium vinosum (strain ATCC 17899 / DSM 180 / NBRC 103801 / NCIMB 10441 / D) (Chromatium vinosum), this protein is Phosphopantetheine adenylyltransferase.